Reading from the N-terminus, the 391-residue chain is 3-ketoacyl-CoA thiolase (391 aa).

C95 functions as the Acyl-thioester intermediate in the catalytic mechanism. Residues H347 and C377 each act as proton acceptor in the active site.

This sequence belongs to the thiolase-like superfamily. Thiolase family. Heterotetramer of two alpha chains (FadB) and two beta chains (FadA).

Its subcellular location is the cytoplasm. It catalyses the reaction an acyl-CoA + acetyl-CoA = a 3-oxoacyl-CoA + CoA. Its pathway is lipid metabolism; fatty acid beta-oxidation. Catalyzes the final step of fatty acid oxidation in which acetyl-CoA is released and the CoA ester of a fatty acid two carbons shorter is formed. In Saccharophagus degradans (strain 2-40 / ATCC 43961 / DSM 17024), this protein is 3-ketoacyl-CoA thiolase.